A 3477-amino-acid chain; its full sequence is Abnormal spindle-like microcephaly-associated protein (3477 aa).

Positions 1–30 (MANRRVGRGCWEVSPTERRPPAGLRGPAAE) are disordered. Residues serine 280, serine 283, serine 367, and serine 392 each carry the phosphoserine modification. A sufficient for interaction with KATNA1:KATNB1 region spans residues 308-409 (ITQSQIHFLS…NMAYMCTSQQ (102 aa)). Polar residues predominate over residues 415–424 (LSNENSQVPQ). Disordered regions lie at residues 415–443 (LSNE…ECQG) and 559–581 (KNEV…DGSM). A Phosphoserine modification is found at serine 425. Residues 560-570 (NEVTPSSTTAS) are compositionally biased toward polar residues. Phosphoserine is present on serine 605. In terms of domain architecture, Calponin-homology (CH) 1 spans 920–1056 (KASKEILLAF…LLWKIAFAFQ (137 aa)). Positions 1057-1078 (VDISLNLDQLKEEIAFLKHTKS) form a coiled coil. Serine 1103 is modified (phosphoserine). The Calponin-homology (CH) 2 domain maps to 1110–1261 (SENIKLLMDW…YLSFLCARLL (152 aa)). 39 consecutive IQ domains span residues 1347–1378 (QNKA…IILQ), 1393–1422 (YLWA…MLKS), 1582–1613 (LKKT…VIIQ), 1632–1661 (TRSA…SVIK), 1655–1684 (ILTS…ATIK), 1728–1757 (MRES…AVIS), 1751–1782 (QRKA…IVIQ), 1801–1830 (VKKA…AALK), 1824–1853 (QSIA…SIIK), 1874–1903 (TKAA…AALK), 1897–1928 (EHQA…LVIQ), 1947–1978 (LRHA…IIIQ), 1970–2001 (QHKC…LLIQ), 2020–2049 (TKAA…AAVT), 2043–2074 (CNKA…IIIQ), 2093–2124 (LKKT…TFIK), 2116–2147 (MHRA…IVIQ), 2166–2197 (ILKA…TLIQ), 2189–2218 (MQTA…ITKT), 2239–2270 (LRHS…TLIQ), 2262–2293 (MHIA…ILIQ), 2311–2342 (VQNA…TFIQ), 2334–2365 (MHRA…VVIQ), 2384–2415 (QRHS…TLIQ), 2407–2438 (MHSS…IFVQ), 2457–2488 (LRKA…VLIQ), 2530–2561 (QWHS…IVIQ), 2624–2653 (QHQA…TVVS), 2665–2696 (RTQA…TLIQ), 2688–2719 (MHRA…VVIQ), 2738–2767 (VQKS…EKMA), 2859–2890 (QKRA…VVLQ), 2909–2938 (IRSS…STIK), 2932–2963 (IKNS…KIQA), 2954–2985 (KVKA…KIIQ), 3029–3060 (RHRA…LIIQ), 3079–3110 (FKKS…RLLH), 3181–3210 (RNRA…GIIK), and 3204–3235 (FTSG…IRLS).

Interacts with KATNA1 and KATNB1; katanin complex formation KATNA1:KATNB1 is required for the association.

Its subcellular location is the cytoplasm. The protein resides in the cytoskeleton. It localises to the spindle. The protein localises to the nucleus. Involved in mitotic spindle regulation and coordination of mitotic processes. The function in regulating microtubule dynamics at spindle poles including spindle orientation, astral microtubule density and poleward microtubule flux seems to depend on the association with the katanin complex formed by KATNA1 and KATNB1. Enhances the microtubule lattice severing activity of KATNA1 by recruiting the katanin complex to microtubules. Can block microtubule minus-end growth and reversely this function can be enhanced by the katanin complex. May have a preferential role in regulating neurogenesis. The polypeptide is Abnormal spindle-like microcephaly-associated protein (ASPM) (Homo sapiens (Human)).